Consider the following 492-residue polypeptide: Glycerol kinase 1 (492 aa).

ADP is bound at residue Thr10. Residues Thr10 and Ser11 each contribute to the ATP site. Thr10 lines the sn-glycerol 3-phosphate pocket. Lys14 contacts ADP. Residues Arg80, Glu81, Tyr132, and Asp241 each coordinate sn-glycerol 3-phosphate. Residues Arg80, Glu81, Tyr132, and Asp241 each coordinate glycerol. Thr263, Gly306, Gly407, and Asn411 together coordinate ADP. Residues Thr263, Gly306, and Gly407 each contribute to the ATP site.

It belongs to the FGGY kinase family.

It catalyses the reaction glycerol + ATP = sn-glycerol 3-phosphate + ADP + H(+). The protein operates within polyol metabolism; glycerol degradation via glycerol kinase pathway; sn-glycerol 3-phosphate from glycerol: step 1/1. Its activity is regulated as follows. Inhibited by fructose 1,6-bisphosphate (FBP). Functionally, key enzyme in the regulation of glycerol uptake and metabolism. Catalyzes the phosphorylation of glycerol to yield sn-glycerol 3-phosphate. In Thermotoga maritima (strain ATCC 43589 / DSM 3109 / JCM 10099 / NBRC 100826 / MSB8), this protein is Glycerol kinase 1.